A 1065-amino-acid polypeptide reads, in one-letter code: Alpha-L-arabinofuranosidase (1065 aa).

The signal sequence occupies residues 1–26 (MKHWKKMAASLIAISTMVAVVPTTYA). The region spanning 277-346 (VVNNKLTLIE…TTELGGVKAE (70 aa)) is the BIG2 domain. Positions 997–1031 (KAPTNPGEGDGDKGDGNKPTTPTTGDKTNVNKPGS) are disordered. The span at 1014–1031 (KPTTPTTGDKTNVNKPGS) shows a compositional bias: polar residues. The helical transmembrane segment at 1040-1060 (VLGLGGAVVALAIAGISLTLW) threads the bilayer.

It belongs to the glycosyl hydrolase 43 family.

It is found in the cell membrane. The catalysed reaction is Hydrolysis of terminal non-reducing alpha-L-arabinofuranoside residues in alpha-L-arabinosides.. Involved in the type II arabinogalactan (AG) side chains degradation. Releases arabinofuranose (Araf) from alpha-1,3-Araf-substituted beta-1,6-galactooligosaccharides. Can use radish root AGP, larch AG and arabinan. Shows weaker activity with gum arabic and arabinoxylan. This Bifidobacterium longum subsp. longum (strain ATCC 15707 / DSM 20219 / JCM 1217 / NCTC 11818 / E194b) protein is Alpha-L-arabinofuranosidase.